Consider the following 72-residue polypeptide: Crustacean hyperglycemic hormone (72 aa).

Pyrrolidone carboxylic acid is present on Q1. Position 3 is a D-phenylalanine (F3). 3 disulfides stabilise this stretch: C7–C43, C23–C39, and C26–C52. Position 72 is a valine amide (V72).

In terms of tissue distribution, produced by the medulla terminalis X-organ in the eyestalks and transported to the sinus gland where they are stored and released.

Its subcellular location is the secreted. Hormone found in the sinus gland of isopods and decapods which controls the blood sugar level. Has a secretagogue action over the amylase released from the midgut gland. May act as a stress hormone and may be involved in the control of molting and reproduction. The protein is Crustacean hyperglycemic hormone of Astacus astacus (Noble crayfish).